Here is a 262-residue protein sequence, read N- to C-terminus: 2-oxo-tetronate isomerase (262 aa).

The active-site Proton donor/acceptor is the glutamate 143. 4 residues coordinate Mg(2+): glutamate 143, aspartate 178, glutamine 204, and glutamate 240. Catalysis depends on glutamate 240, which acts as the Proton donor/acceptor.

It belongs to the hyi family. OtnI subfamily.

The catalysed reaction is 2-dehydro-L-erythronate = 3-dehydro-L-erythronate. The enzyme catalyses 2-dehydro-D-erythronate = 3-dehydro-D-erythronate. In terms of biological role, catalyzes the isomerization of 2-oxo-tetronate to 3-oxo-tetronate. The sequence is that of 2-oxo-tetronate isomerase from Pectobacterium atrosepticum (strain SCRI 1043 / ATCC BAA-672) (Erwinia carotovora subsp. atroseptica).